We begin with the raw amino-acid sequence, 308 residues long: D-alanine--D-alanine ligase (308 aa).

One can recognise an ATP-grasp domain in the interval 102 to 302 (KKVAAAAGIP…FGDLVSWMVE (201 aa)). 128–183 (PLQPPYVVKPVREGSSFGVVIVKEDQSHPPQILTSSEWPFGNQVMVERYIHGRELT) contributes to the ATP binding site. Mg(2+)-binding residues include aspartate 252, glutamate 269, and asparagine 271.

This sequence belongs to the D-alanine--D-alanine ligase family. Mg(2+) is required as a cofactor. The cofactor is Mn(2+).

The protein resides in the cytoplasm. The catalysed reaction is 2 D-alanine + ATP = D-alanyl-D-alanine + ADP + phosphate + H(+). Its pathway is cell wall biogenesis; peptidoglycan biosynthesis. Functionally, cell wall formation. This chain is D-alanine--D-alanine ligase, found in Agrobacterium fabrum (strain C58 / ATCC 33970) (Agrobacterium tumefaciens (strain C58)).